Reading from the N-terminus, the 457-residue chain is Dolichol phosphate-mannose mannosyltransferase (457 aa).

Residues 1-12 (MKRLAKAAFSQN) are Cytoplasmic-facing. Residues 13-33 (SLTAPIVSTFVYLISVVRVVL) form a helical membrane-spanning segment. Residues 34 to 91 (NGNWPVTSSDTAMFQHIGWMVFSGKRYYIDAWDPKPPLTLELATIIAYISNGDPHLQH) lie on the Extracellular side of the membrane. Residues 92 to 112 (TLSVVSTIVAGILLTYLISHI) form a helical membrane-spanning segment. The Cytoplasmic segment spans residues 113 to 120 (TSEITGNQ). Residues 121 to 141 (FAGLLSGIVFITFPVIHYSAV) form a helical membrane-spanning segment. Residues 142–173 (FGYEPKYFVFLFGLGSIYLSRNPKPILSGAAA) lie on the Extracellular side of the membrane. Residues 174-194 (AASAGMWQFAIIFPIISFGII) form a helical membrane-spanning segment. The Cytoplasmic portion of the chain corresponds to 195–211 (SRRKSKDLILKYVFGAT). Residues 212 to 232 (IIAFISLLPIYLQGGLVAMTV) traverse the membrane as a helical segment. The Extracellular segment spans residues 233-259 (EVIIAPLYAGETQSFLYRLVKGVTHLK). A helical transmembrane segment spans residues 260 to 280 (LMIPIALLGMAGILLGFLDDI). Residues 281–283 (RER) are Cytoplasmic-facing. The helical transmembrane segment at 284–304 (WWVVGLLLWFCIQIFILDYDG) threads the bilayer. Topologically, residues 305 to 307 (ADD) are extracellular. Residues 308–328 (LFLGIILVSMGIGFAFEKLST) form a helical membrane-spanning segment. Residues 329 to 337 (KYESERINS) are Cytoplasmic-facing. The helical transmembrane segment at 338-358 (IVTAVVVCMLIWQVVTLGGVG) threads the bilayer. Over 359–457 (VITNPYSYSG…EEKCGKWRLP (99 aa)) the chain is Extracellular.

It localises to the cell membrane. It functions in the pathway cell surface structure biogenesis; S-layer biogenesis. It participates in protein modification; protein glycosylation. In terms of biological role, involved in the assembly of a N-linked pentasaccharide that decorates the S-layer glycoprotein and flagellins. Transfers mannose, the terminal pentasaccharide residue, from its dedicated dolichol phosphate carrier to the protein-bound glycan comprising the first four subunits of the N-linked pentasaccharide. The protein is Dolichol phosphate-mannose mannosyltransferase (aglS) of Haloferax volcanii (strain ATCC 29605 / DSM 3757 / JCM 8879 / NBRC 14742 / NCIMB 2012 / VKM B-1768 / DS2) (Halobacterium volcanii).